The following is a 221-amino-acid chain: N-(5'-phosphoribosyl)anthranilate isomerase (221 aa).

This sequence belongs to the TrpF family.

It catalyses the reaction N-(5-phospho-beta-D-ribosyl)anthranilate = 1-(2-carboxyphenylamino)-1-deoxy-D-ribulose 5-phosphate. Its pathway is amino-acid biosynthesis; L-tryptophan biosynthesis; L-tryptophan from chorismate: step 3/5. The protein is N-(5'-phosphoribosyl)anthranilate isomerase of Chlorobaculum tepidum (strain ATCC 49652 / DSM 12025 / NBRC 103806 / TLS) (Chlorobium tepidum).